The following is a 257-amino-acid chain: Acetylglutamate kinase (257 aa).

Substrate contacts are provided by residues 43–44, Arg65, and Asn157; that span reads GG. ATP-binding positions include 180–185 and 208–210; these read DVSGIL and IIT.

This sequence belongs to the acetylglutamate kinase family. ArgB subfamily. As to quaternary structure, homodimer.

Its subcellular location is the cytoplasm. It catalyses the reaction N-acetyl-L-glutamate + ATP = N-acetyl-L-glutamyl 5-phosphate + ADP. The protein operates within amino-acid biosynthesis; L-arginine biosynthesis; N(2)-acetyl-L-ornithine from L-glutamate: step 2/4. Its function is as follows. Catalyzes the ATP-dependent phosphorylation of N-acetyl-L-glutamate. In Salmonella schwarzengrund (strain CVM19633), this protein is Acetylglutamate kinase.